A 764-amino-acid chain; its full sequence is 5-methyltetrahydropteroyltriglutamate--homocysteine methyltransferase (764 aa).

5-methyltetrahydropteroyltri-L-glutamate is bound by residues 16-19 and Lys-121; that span reads RELK. L-homocysteine is bound by residues 440–442 and Glu-493; that span reads IGS. L-methionine is bound by residues 440 to 442 and Glu-493; that span reads IGS. 5-methyltetrahydropteroyltri-L-glutamate-binding positions include 524-525 and Trp-570; that span reads RC. Asp-608 contributes to the L-homocysteine binding site. Asp-608 contributes to the L-methionine binding site. Glu-614 contacts 5-methyltetrahydropteroyltri-L-glutamate. Zn(2+) contacts are provided by His-650, Cys-652, and Glu-674. The active-site Proton donor is the His-703. Position 735 (Cys-735) interacts with Zn(2+).

The protein belongs to the vitamin-B12 independent methionine synthase family. Zn(2+) serves as cofactor.

The catalysed reaction is 5-methyltetrahydropteroyltri-L-glutamate + L-homocysteine = tetrahydropteroyltri-L-glutamate + L-methionine. It functions in the pathway amino-acid biosynthesis; L-methionine biosynthesis via de novo pathway; L-methionine from L-homocysteine (MetE route): step 1/1. In terms of biological role, catalyzes the transfer of a methyl group from 5-methyltetrahydrofolate to homocysteine resulting in methionine formation. This is 5-methyltetrahydropteroyltriglutamate--homocysteine methyltransferase from Burkholderia orbicola (strain MC0-3).